A 552-amino-acid chain; its full sequence is Oxygen-dependent choline dehydrogenase (552 aa).

7–36 (DYIIIGAGSAGNVLAARLTEDKDTTVLLLE) is an FAD binding site. Catalysis depends on H477, which acts as the Proton acceptor.

This sequence belongs to the GMC oxidoreductase family. Requires FAD as cofactor.

It carries out the reaction choline + A = betaine aldehyde + AH2. It catalyses the reaction betaine aldehyde + NAD(+) + H2O = glycine betaine + NADH + 2 H(+). Its pathway is amine and polyamine biosynthesis; betaine biosynthesis via choline pathway; betaine aldehyde from choline (cytochrome c reductase route): step 1/1. Its function is as follows. Involved in the biosynthesis of the osmoprotectant glycine betaine. Catalyzes the oxidation of choline to betaine aldehyde and betaine aldehyde to glycine betaine at the same rate. The chain is Oxygen-dependent choline dehydrogenase from Acinetobacter baumannii (strain AB307-0294).